The primary structure comprises 156 residues: H/ACA ribonucleoprotein complex subunit 2-like protein (156 aa).

The protein belongs to the eukaryotic ribosomal protein eL8 family. Component of the small nucleolar ribonucleoprotein particle containing H/ACA-type snoRNAs (H/ACA snoRNPs).

It localises to the nucleus. Its subcellular location is the nucleolus. Its function is as follows. Required for ribosome biogenesis. Part of a complex which catalyzes pseudouridylation of rRNA. This involves the isomerization of uridine such that the ribose is subsequently attached to C5, instead of the normal N1. Pseudouridine ('psi') residues may serve to stabilize the conformation of rRNAs. In Arabidopsis thaliana (Mouse-ear cress), this protein is H/ACA ribonucleoprotein complex subunit 2-like protein.